The sequence spans 482 residues: MPPSPLDDRVVVALSRPVRPQDLNLCLDSSYLGSANPGSNSHPPVIATTVVSLKAANLTYMPSSSGSARSLNCGCSSASCCTVATYDKDNQAQTQAIAAGTTTTAIGTSTTCPANQMVNNNENTGSLSPSSGVGSPVSGTPKQLASIKIIYPNDLAKKMTKCSKSHLPSQGPVIIDCRPFMEYNKSHIQGAVHINCADKISRRRLQQGKITVLDLISCREGKDSFKRIFSKEIIVYDENTNEPSRVMPSQPLHIVLESLKREGKEPLVLKGGLSSFKQNHENLCDNSLQLQECREVGGGASAASSLLPQPIPTTPDIENAELTPILPFLFLGNEQDAQDLDTMQRLNIGYVINVTTHLPLYHYEKGLFNYKRLPATDSNKQNLRQYFEEAFEFIEEAHQCGKGLLIHCQAGVSRSATIVIAYLMKHTRMTMTDAYKFVKGKRPIISPNLNFMGQLLEFEEDLNNGVTPRILTPKLMGVETVV.

The Rhodanese domain occupies Pro168–Asp285. Residues Lys199 to Leu215 are interaction with MAP kinases. The Tyrosine-protein phosphatase domain occupies Glu321–Asn464. Catalysis depends on Cys408, which acts as the Phosphocysteine intermediate.

It belongs to the protein-tyrosine phosphatase family. Non-receptor class dual specificity subfamily. Monomer. Interacts with MAPK14. Expressed in keratinocytes (at protein level). Detected in brain.

Its subcellular location is the cytoplasm. It is found in the nucleus. It catalyses the reaction O-phospho-L-tyrosyl-[protein] + H2O = L-tyrosyl-[protein] + phosphate. The enzyme catalyses O-phospho-L-seryl-[protein] + H2O = L-seryl-[protein] + phosphate. It carries out the reaction O-phospho-L-threonyl-[protein] + H2O = L-threonyl-[protein] + phosphate. Functionally, protein phosphatase involved in the inactivation of MAP kinases. Has a specificity for the MAPK11/MAPK12/MAPK13/MAPK14 subfamily. It preferably dephosphorylates p38. This Homo sapiens (Human) protein is Dual specificity protein phosphatase 10 (DUSP10).